The chain runs to 429 residues: Argininosuccinate lyase (429 aa).

This sequence belongs to the lyase 1 family. Argininosuccinate lyase subfamily.

The protein resides in the cytoplasm. The catalysed reaction is 2-(N(omega)-L-arginino)succinate = fumarate + L-arginine. It participates in amino-acid biosynthesis; L-arginine biosynthesis; L-arginine from L-ornithine and carbamoyl phosphate: step 3/3. This Pyrobaculum calidifontis (strain DSM 21063 / JCM 11548 / VA1) protein is Argininosuccinate lyase.